A 272-amino-acid polypeptide reads, in one-letter code: Shikimate dehydrogenase (NADP(+)) (272 aa).

Shikimate is bound by residues 14–16 (SLS) and Thr61. The active-site Proton acceptor is the Lys65. Asp102 is a binding site for shikimate. Residues 127–131 (GAGGA), 151–156 (NRTPSK), and Leu215 contribute to the NADP(+) site. Shikimate is bound at residue Tyr217. Gly239 provides a ligand contact to NADP(+).

It belongs to the shikimate dehydrogenase family. In terms of assembly, homodimer.

The catalysed reaction is shikimate + NADP(+) = 3-dehydroshikimate + NADPH + H(+). Its pathway is metabolic intermediate biosynthesis; chorismate biosynthesis; chorismate from D-erythrose 4-phosphate and phosphoenolpyruvate: step 4/7. In terms of biological role, involved in the biosynthesis of the chorismate, which leads to the biosynthesis of aromatic amino acids. Catalyzes the reversible NADPH linked reduction of 3-dehydroshikimate (DHSA) to yield shikimate (SA). The chain is Shikimate dehydrogenase (NADP(+)) from Coxiella burnetii (strain CbuK_Q154) (Coxiella burnetii (strain Q154)).